A 238-amino-acid polypeptide reads, in one-letter code: UPF0280 protein Mboo_1274 (238 aa).

It belongs to the UPF0280 family.

The chain is UPF0280 protein Mboo_1274 from Methanoregula boonei (strain DSM 21154 / JCM 14090 / 6A8).